Here is a 90-residue protein sequence, read N- to C-terminus: Cell division topological specificity factor (90 aa).

The tract at residues 1–21 (MAGFWSKLFSSEEKPSSAQTA) is disordered. Positions 10 to 21 (SSEEKPSSAQTA) are enriched in basic and acidic residues.

This sequence belongs to the MinE family.

Functionally, prevents the cell division inhibition by proteins MinC and MinD at internal division sites while permitting inhibition at polar sites. This ensures cell division at the proper site by restricting the formation of a division septum at the midpoint of the long axis of the cell. The sequence is that of Cell division topological specificity factor from Acinetobacter baumannii (strain AB307-0294).